The following is a 333-amino-acid chain: Large ribosomal subunit protein uL3 (333 aa).

Basic residues-rich tracts occupy residues 1 to 10 (MGMKRNRPRR) and 17 to 26 (PRKRAKRPVP). Residues 1–29 (MGMKRNRPRRGSLAFSPRKRAKRPVPKIR) are disordered.

This sequence belongs to the universal ribosomal protein uL3 family. In terms of assembly, part of the 50S ribosomal subunit. Forms a cluster with proteins L14 and L24e.

Its function is as follows. One of the primary rRNA binding proteins, it binds directly near the 3'-end of the 23S rRNA, where it nucleates assembly of the 50S subunit. The polypeptide is Large ribosomal subunit protein uL3 (Methanococcus aeolicus (strain ATCC BAA-1280 / DSM 17508 / OCM 812 / Nankai-3)).